Here is a 454-residue protein sequence, read N- to C-terminus: Type II methyltransferase M.MvaI (454 aa).

It belongs to the N(4)/N(6)-methyltransferase family. N(4) subfamily.

It catalyses the reaction a 2'-deoxycytidine in DNA + S-adenosyl-L-methionine = an N(4)-methyl-2'-deoxycytidine in DNA + S-adenosyl-L-homocysteine + H(+). Functionally, an alpha subtype methylase, recognizes the double-stranded sequence 5'-CCWGG-3', methylatES C-2 on both strands, and protects the DNA from cleavage by the MvaI endonuclease. The protein is Type II methyltransferase M.MvaI of Kocuria varians (Micrococcus varians).